The sequence spans 1925 residues: Diacylglycerol kinase eta (1925 aa).

The PH domain occupies 82–175 (AIIREGYLMK…WLGSLKTATA (94 aa)). Phorbol-ester/DAG-type zinc fingers lie at residues 195 to 245 (HHHW…IANC) and 268 to 319 (PHQW…PIVC). A DAGKc domain is found at 350-486 (GNFSPLLVFV…DRWSIMVFEK (137 aa)). 8 disordered regions span residues 620-641 (EKDNINSKERRNSRSLRSSEKE), 783-805 (ANIDDAGNRLSPSSEAGENTPTE), 847-872 (DKERTASGQVESEKEEADVNEKSEPQ), 1013-1065 (TTLC…NPQQ), 1113-1141 (DRNSGDNHNDNGKNEEADTPTNSAPTRTY), 1167-1234 (NTTT…SSAS), 1256-1276 (IRRHSSHAPSLAVRDYDKDKD), and 1385-1405 (FSAGDKDEKPGKDKERTPTEE). A compositionally biased stretch (polar residues) spans 792–802 (LSPSSEAGENT). Positions 863–872 (ADVNEKSEPQ) are enriched in basic and acidic residues. The span at 1115–1128 (NSGDNHNDNGKNEE) shows a compositional bias: basic and acidic residues. Low complexity predominate over residues 1167–1187 (NTTTSTSSSISTTTTTSTTST). The span at 1386–1405 (SAGDKDEKPGKDKERTPTEE) shows a compositional bias: basic and acidic residues. In terms of domain architecture, SAM spans 1862 to 1925 (WSVNEVVTWL…LQAIKDLSEN (64 aa)).

Belongs to the eukaryotic diacylglycerol kinase family.

The protein resides in the cytoplasm. It carries out the reaction a 1,2-diacyl-sn-glycerol + ATP = a 1,2-diacyl-sn-glycero-3-phosphate + ADP + H(+). Functionally, phosphorylates diacylglycerol (DAG) to generate phosphatidic acid (PA). The protein is Diacylglycerol kinase eta of Drosophila mojavensis (Fruit fly).